Here is a 142-residue protein sequence, read N- to C-terminus: Nucleoside diphosphate kinase (142 aa).

Residues Lys-11, Phe-59, Arg-87, Thr-93, Arg-104, and Asn-114 each coordinate ATP. His-117 (pros-phosphohistidine intermediate) is an active-site residue.

Belongs to the NDK family. Homotetramer. The cofactor is Mg(2+).

It is found in the cytoplasm. It catalyses the reaction dZDP + ATP = dZTP + ADP. The enzyme catalyses a 2'-deoxyribonucleoside 5'-diphosphate + ATP = a 2'-deoxyribonucleoside 5'-triphosphate + ADP. The catalysed reaction is a ribonucleoside 5'-diphosphate + ATP = a ribonucleoside 5'-triphosphate + ADP. Its pathway is purine metabolism. Functionally, major role in the synthesis of nucleoside triphosphates other than ATP. The ATP gamma phosphate is transferred to the NDP beta phosphate via a ping-pong mechanism, using a phosphorylated active-site intermediate. In terms of biological role, (Microbial infection) Catalyzes the phosphorylation of dZDP to dZTP, when the bacterium is infected by a phage that produces the substrate for the synthesis of dZTP (2- amino-2'-deoxyadenosine 5'-triphosphate), which is then used by the phage as a DNA polymerase substrate. In Vibrio cholerae serotype O1 (strain ATCC 39315 / El Tor Inaba N16961), this protein is Nucleoside diphosphate kinase.